Here is a 152-residue protein sequence, read N- to C-terminus: UPF0266 membrane protein YobD (152 aa).

The Periplasmic portion of the chain corresponds to 1 to 5 (MTITD). Residues 6–26 (LVLILFIAALLAYALYDQFIM) form a helical membrane-spanning segment. Residues 27 to 44 (PRRNGPTLLSIALLRRGR) lie on the Cytoplasmic side of the membrane. The chain crosses the membrane as a helical span at residues 45–65 (IDSVIFVGLVAILIYNNVTSH). Gly66 is a topological domain (periplasmic). A helical membrane pass occupies residues 67–87 (AQMTTWLLSALALMGFYIFWI). Over 88 to 152 (RTPRIIFKQR…KIYKLLIENQ (65 aa)) the chain is Cytoplasmic.

The protein belongs to the UPF0266 family.

The protein localises to the cell inner membrane. The polypeptide is UPF0266 membrane protein YobD (yobD) (Salmonella typhi).